Consider the following 200-residue polypeptide: TATA-box-binding protein 1 (200 aa).

N-acetylthreonine is present on Thr2. A run of 2 repeats spans residues 25 to 101 (LQNI…ARIV) and 115 to 192 (IQNI…YPVL).

It belongs to the TBP family. In terms of assembly, belongs to the TFIID complex together with the TBP-associated factors (TAFs). Binds DNA as monomer. Interacts with TAF1 (via N-terminus). Interacts with MEE12/CCG1. Associates with PWP2 in the nucleus. Component of a nuclear protein complex containing at least TATA binding proteins (TBPs, e.g. TBP1 and TBP2) and ATX1.

The protein localises to the nucleus. Its function is as follows. General transcription factor that functions at the core of the DNA-binding multiprotein factor TFIID. Binding of TFIID to the TATA box is the initial transcriptional step of the pre-initiation complex (PIC), playing a role in the activation of eukaryotic genes transcribed by RNA polymerase II. The chain is TATA-box-binding protein 1 from Arabidopsis thaliana (Mouse-ear cress).